Here is a 428-residue protein sequence, read N- to C-terminus: MSAIVDIVGREVLDSRGNPTVECDVLLESGVMGRAAVPSGASTGSREAIELRDGDKARYLGKGVLKAVEHINTEISEAVLGLDASEQAFLDKTLIDLDGTDNKSRLGANAMLAVSMAVARAAAEESGLPLYRYLGGMGGMQLPVPMMNVINGGAHANNSLDLQEFMIIPVGAPSFREAVRWGAEVFHALKKIIHDKGMSTAVGDEGGFAPSVENHEAAIQLILQAIEAAGYTAGEQIALGLDCAASEFYKDGQYVLEGEGGLRLTAQQWTDMLATWCDKYPIISIEDGMAEGDWDGWKTLTERLGQNVQLVGDDLFVTNTKILKEGIDKRIANSILIKINQIGTLTETFAAIEMAKRAGYTAVISHRSGETEDSTIADIAVGTNAGQIKTGSLSRSDRIAKYNQLLRIEEDLGDIAFYPGRAAFYNLR.

Residue glutamine 163 coordinates (2R)-2-phosphoglycerate. The active-site Proton donor is the glutamate 205. Residues aspartate 242, glutamate 286, and aspartate 313 each coordinate Mg(2+). (2R)-2-phosphoglycerate is bound by residues lysine 338, arginine 367, serine 368, and lysine 389. Lysine 338 (proton acceptor) is an active-site residue.

This sequence belongs to the enolase family. Mg(2+) is required as a cofactor.

Its subcellular location is the cytoplasm. It is found in the secreted. The protein resides in the cell surface. It carries out the reaction (2R)-2-phosphoglycerate = phosphoenolpyruvate + H2O. Its pathway is carbohydrate degradation; glycolysis; pyruvate from D-glyceraldehyde 3-phosphate: step 4/5. Its function is as follows. Catalyzes the reversible conversion of 2-phosphoglycerate (2-PG) into phosphoenolpyruvate (PEP). It is essential for the degradation of carbohydrates via glycolysis. This is Enolase from Acidovorax ebreus (strain TPSY) (Diaphorobacter sp. (strain TPSY)).